The primary structure comprises 79 residues: MLGSKGLSPTDLRGMTDGHLRVELKNAKEEVFKLRFQSATGQLAHNARLRAVRRDIARIYTVMRERDIGIRSVQEEVSQ.

The protein belongs to the universal ribosomal protein uL29 family.

The chain is Large ribosomal subunit protein uL29 from Tropheryma whipplei (strain TW08/27) (Whipple's bacillus).